A 197-amino-acid polypeptide reads, in one-letter code: Imidazoleglycerol-phosphate dehydratase (197 aa).

It belongs to the imidazoleglycerol-phosphate dehydratase family.

The protein resides in the cytoplasm. It carries out the reaction D-erythro-1-(imidazol-4-yl)glycerol 3-phosphate = 3-(imidazol-4-yl)-2-oxopropyl phosphate + H2O. Its pathway is amino-acid biosynthesis; L-histidine biosynthesis; L-histidine from 5-phospho-alpha-D-ribose 1-diphosphate: step 6/9. The protein is Imidazoleglycerol-phosphate dehydratase of Bradyrhizobium diazoefficiens (strain JCM 10833 / BCRC 13528 / IAM 13628 / NBRC 14792 / USDA 110).